The sequence spans 170 residues: Calcineurin subunit B type 1 (170 aa).

G2 carries N-myristoyl glycine lipidation. EF-hand domains are found at residues 18–46, 50–85, 87–122, and 128–163; these read DEIK…FMSL, QQNP…FSVK, DKEQ…MVGN, and QLQQ…LDIH. Residues D31, D33, S35, S37, E42, D63, D65, N67, E69, E74, D100, D102, D104, Y106, and E111 each contribute to the Ca(2+) site. Y106 is modified (phosphotyrosine). The segment at 131 to 136 is calcineurin A binding; it reads QIVDKT. 5 residues coordinate Ca(2+): D141, D143, D145, R147, and E152.

This sequence belongs to the calcineurin regulatory subunit family. In terms of assembly, forms a complex composed of a calmodulin-dependent catalytic subunit (also known as calcineurin A) and a regulatory Ca(2+)-binding subunit (also known as calcineurin B). There are three catalytic subunits, each encoded by a separate gene (PPP3CA, PPP3CB, and PPP3CC) and two regulatory subunits which are also encoded by separate genes (PPP3R1 and PPP3R2). The interaction between the 2 subunits is Ca(2+)-independent. Interacts with catalytic subunit PPP3CA/calcineurin A. Interacts with catalytic subunit PPP3CB/calcineurin A. Interacts with CIB1 (via C-terminal region); the interaction increases upon cardiomyocyte hypertrophy. Interacts with RCAN1. Interacts with SPATA33 (via PQIIIT motif).

The protein localises to the cytoplasm. It is found in the cytosol. It localises to the cell membrane. Its subcellular location is the sarcolemma. Regulatory subunit of calcineurin, a calcium-dependent, calmodulin stimulated protein phosphatase. Confers calcium sensitivity. The protein is Calcineurin subunit B type 1 (PPP3R1) of Bos taurus (Bovine).